The sequence spans 367 residues: Histidinol-phosphate aminotransferase (367 aa).

Residue Lys-230 is modified to N6-(pyridoxal phosphate)lysine.

The protein belongs to the class-II pyridoxal-phosphate-dependent aminotransferase family. Histidinol-phosphate aminotransferase subfamily. In terms of assembly, homodimer. Pyridoxal 5'-phosphate is required as a cofactor.

The catalysed reaction is L-histidinol phosphate + 2-oxoglutarate = 3-(imidazol-4-yl)-2-oxopropyl phosphate + L-glutamate. It participates in amino-acid biosynthesis; L-histidine biosynthesis; L-histidine from 5-phospho-alpha-D-ribose 1-diphosphate: step 7/9. The polypeptide is Histidinol-phosphate aminotransferase (Thermobifida fusca (strain YX)).